A 229-amino-acid polypeptide reads, in one-letter code: Large ribosomal subunit protein uL1 (229 aa).

The protein belongs to the universal ribosomal protein uL1 family. As to quaternary structure, part of the 50S ribosomal subunit.

Its function is as follows. Binds directly to 23S rRNA. The L1 stalk is quite mobile in the ribosome, and is involved in E site tRNA release. Functionally, protein L1 is also a translational repressor protein, it controls the translation of the L11 operon by binding to its mRNA. This Streptococcus pneumoniae (strain ATCC 700669 / Spain 23F-1) protein is Large ribosomal subunit protein uL1.